The chain runs to 185 residues: N-alpha-acetyltransferase 30 (185 aa).

Residues 31-179 (IEYIPYQGES…DAVRLLLPLN (149 aa)) enclose the N-acetyltransferase domain.

This sequence belongs to the acetyltransferase family. MAK3 subfamily.

Functionally, probable catalytic component of a complex displaying alpha (N-terminal) acetyltransferase activity. The chain is N-alpha-acetyltransferase 30 from Dictyostelium discoideum (Social amoeba).